The primary structure comprises 252 residues: 5-oxoprolinase subunit A 1 (252 aa).

This sequence belongs to the LamB/PxpA family. Forms a complex composed of PxpA, PxpB and PxpC.

It catalyses the reaction 5-oxo-L-proline + ATP + 2 H2O = L-glutamate + ADP + phosphate + H(+). Catalyzes the cleavage of 5-oxoproline to form L-glutamate coupled to the hydrolysis of ATP to ADP and inorganic phosphate. In Pseudomonas putida (strain ATCC 47054 / DSM 6125 / CFBP 8728 / NCIMB 11950 / KT2440), this protein is 5-oxoprolinase subunit A 1.